The primary structure comprises 263 residues: Lens fiber major intrinsic protein (263 aa).

Residues 1 to 9 (MWELRSASF) are Cytoplasmic-facing. Residues 10–29 (WRAIFAEFFATLFYVFFGLG) traverse the membrane as a helical segment. The Extracellular segment spans residues 30–41 (ASLRWAPGPLHV). The chain crosses the membrane as a helical span at residues 42–59 (LQVALAFGLALAXLVQTV). Topologically, residues 60–61 (GH) are cytoplasmic. Positions 62 to 77 (ISGAHVNPAVTFXFLV) form an intramembrane region, discontinuously helical. An NPA 1 motif is present at residues 68 to 70 (NPA). Residues 78–82 (GSQMS) are Cytoplasmic-facing. Residues 83–106 (LLRAFCYMAAQLLGAVAGAAVLYS) traverse the membrane as a helical segment. At 107–127 (VTPPAVRGNLALNTLHAGVSV) the chain is on the extracellular side. Residues 128 to 148 (XQATTVEIFLTLQFVLCIFAT) traverse the membrane as a helical segment. Residues 149 to 156 (YDERRNGR) lie on the Cytoplasmic side of the membrane. A helical membrane pass occupies residues 157–175 (LGSVALAVGFSLTLGHLFG). At 176–178 (MYY) the chain is on the extracellular side. Residues 179–193 (TGAGMNPARSFAPAI) constitute an intramembrane region (discontinuously helical). Positions 184-186 (NPA) match the NPA 2 motif. Residues 194–200 (LTRNFTN) are Extracellular-facing. Residues 201–222 (HWVYWVGPIIGGGLGSLLYDFL) traverse the membrane as a helical segment. Topologically, residues 223-263 (LFPRLKSVSERLSILKGTRPSDNNGQPEGTGEPVELKTQAL) are cytoplasmic. The segment at 227-237 (LKSVSERLSIL) is interaction with CALM. Ser235 and Ser243 each carry phosphoserine. The disordered stretch occupies residues 238 to 263 (KGTRPSDNNGQPEGTGEPVELKTQAL). A deamidated asparagine; by deterioration mark is found at Asn245 and Asn246.

It belongs to the MIP/aquaporin (TC 1.A.8) family. In terms of assembly, homotetramer; each monomer provides an independent water pore. Two homotetramers on opposing membranes can dimerize, forming a cell-cell junction. Interacts with CALM; the calcium-calmodulin/CALM complex interacts with the cytoplasmic domains of two aquaporins, leading to channel closure. Interacts with BFSP1 (via C-terminus); prevents calcium-dependent inhibition of the water channel activity. Subject to partial proteolytic cleavage in the eye lens core. Partial proteolysis promotes interactions between tetramers from adjoining membranes. Post-translationally, fatty acylated at Met-1 and Lys-238. The acyl modifications, in decreasing order of ion abundance, are: oleoyl (C18:1) &gt; palmitoyl (C16:0) &gt; stearoyl (C18:0) &gt; eicosenoyl (C20:1) &gt; dihomo-gamma-linolenoyl (C20:3) &gt; palmitoleoyl (C16:1) &gt; eicosadienoyl (C20:2). Detected in eye lens (at protein level).

The protein localises to the cell membrane. The protein resides in the cell junction. It carries out the reaction H2O(in) = H2O(out). With respect to regulation, the water channel activity is inhibited by calcium through calmodulin/CALM. In terms of biological role, aquaporins form homotetrameric transmembrane channels, with each monomer independently mediating water transport across the plasma membrane along its osmotic gradient. Specifically expressed in lens fiber cells, this aquaporin is crucial for maintaining lens water homeostasis and transparency. Beyond water permeability, it also acts as a cell-to-cell adhesion molecule, forming thin junctions between lens fiber cells that are essential for maintaining the ordered structure and transparency of the lens. The protein is Lens fiber major intrinsic protein of Cavia porcellus (Guinea pig).